A 273-amino-acid chain; its full sequence is Undecaprenyl-diphosphatase (273 aa).

7 helical membrane-spanning segments follow: residues 13–35 (GLVE…VFGN), 45–62 (VFEI…VFEY), 82–102 (FVLN…LFDK), 108–128 (LFNP…ILWV), 186–206 (TEFS…YDVL), 219–239 (LILI…KALL), and 250–270 (FAYY…SGWI).

The protein belongs to the UppP family.

Its subcellular location is the cell inner membrane. The enzyme catalyses di-trans,octa-cis-undecaprenyl diphosphate + H2O = di-trans,octa-cis-undecaprenyl phosphate + phosphate + H(+). In terms of biological role, catalyzes the dephosphorylation of undecaprenyl diphosphate (UPP). Confers resistance to bacitracin. This is Undecaprenyl-diphosphatase from Neisseria gonorrhoeae (strain NCCP11945).